We begin with the raw amino-acid sequence, 346 residues long: Acetyl-coenzyme A carboxylase carboxyl transferase subunit beta (346 aa).

Residues 24 to 292 form the CoA carboxyltransferase N-terminal domain; that stretch reads LWIKCPKSGD…LPEVEPIAVA (269 aa). Residues 300–311 are compositionally biased toward acidic residues; that stretch reads AEAEAAPDEVVE. The tract at residues 300 to 346 is disordered; it reads AEAEAAPDEVVEVEAPAVDEIVEEKPAATKAKPRSKAKSKAAPKTDE. Over residues 330–340 the composition is skewed to basic residues; the sequence is AKPRSKAKSKA.

It belongs to the AccD/PCCB family. As to quaternary structure, acetyl-CoA carboxylase is a heterohexamer composed of biotin carboxyl carrier protein (AccB), biotin carboxylase (AccC) and two subunits each of ACCase subunit alpha (AccA) and ACCase subunit beta (AccD).

Its subcellular location is the cytoplasm. It carries out the reaction N(6)-carboxybiotinyl-L-lysyl-[protein] + acetyl-CoA = N(6)-biotinyl-L-lysyl-[protein] + malonyl-CoA. The protein operates within lipid metabolism; malonyl-CoA biosynthesis; malonyl-CoA from acetyl-CoA: step 1/1. In terms of biological role, component of the acetyl coenzyme A carboxylase (ACC) complex. Biotin carboxylase (BC) catalyzes the carboxylation of biotin on its carrier protein (BCCP) and then the CO(2) group is transferred by the transcarboxylase to acetyl-CoA to form malonyl-CoA. This chain is Acetyl-coenzyme A carboxylase carboxyl transferase subunit beta, found in Hirschia baltica (strain ATCC 49814 / DSM 5838 / IFAM 1418).